The chain runs to 249 residues: Small ribosomal subunit protein eS6 (249 aa).

The segment covering 223–238 has biased composition (basic residues); the sequence is LRQRDHSKKHTRKVHA. The interval 223 to 249 is disordered; the sequence is LRQRDHSKKHTRKVHAQRAEVAAFQKK.

This sequence belongs to the eukaryotic ribosomal protein eS6 family. Post-translationally, ribosomal protein S6 is the major substrate of protein kinases in eukaryote ribosomes.

Functionally, component of the 40S small ribosomal subunit. Plays an important role in controlling cell growth and proliferation through the selective translation of particular classes of mRNA. The chain is Small ribosomal subunit protein eS6 (RPS6) from Leishmania major.